The following is a 207-amino-acid chain: Large ribosomal subunit protein uL4 (207 aa).

The interval 53 to 76 (NRSAVRGGGRKPWRQKGTGRARQG) is disordered. Residues 60–71 (GGRKPWRQKGTG) are compositionally biased toward basic residues.

Belongs to the universal ribosomal protein uL4 family. Part of the 50S ribosomal subunit.

One of the primary rRNA binding proteins, this protein initially binds near the 5'-end of the 23S rRNA. It is important during the early stages of 50S assembly. It makes multiple contacts with different domains of the 23S rRNA in the assembled 50S subunit and ribosome. Its function is as follows. Forms part of the polypeptide exit tunnel. In Staphylococcus saprophyticus subsp. saprophyticus (strain ATCC 15305 / DSM 20229 / NCIMB 8711 / NCTC 7292 / S-41), this protein is Large ribosomal subunit protein uL4.